We begin with the raw amino-acid sequence, 169 residues long: Peptide deformylase (169 aa).

Residues cysteine 91 and histidine 133 each coordinate Fe cation. Glutamate 134 is a catalytic residue. Residue histidine 137 participates in Fe cation binding.

This sequence belongs to the polypeptide deformylase family. Fe(2+) is required as a cofactor.

It catalyses the reaction N-terminal N-formyl-L-methionyl-[peptide] + H2O = N-terminal L-methionyl-[peptide] + formate. Removes the formyl group from the N-terminal Met of newly synthesized proteins. Requires at least a dipeptide for an efficient rate of reaction. N-terminal L-methionine is a prerequisite for activity but the enzyme has broad specificity at other positions. The chain is Peptide deformylase from Salmonella arizonae (strain ATCC BAA-731 / CDC346-86 / RSK2980).